A 498-amino-acid chain; its full sequence is Calcium uptake protein, mitochondrial (498 aa).

A mitochondrion-targeting transit peptide spans 1–29 (MPALSHYRSVSSLPSVDRSFLLIQRLRIH). EF-hand domains follow at residues 216–241 (EFFM…VTLL), 243–278 (IPES…MRSQ), 329–364 (LTEE…AADA), and 437–472 (LSDN…RERD). Ca(2+) contacts are provided by aspartate 222, aspartate 224, aspartate 226, glutamate 233, aspartate 256, aspartate 258, asparagine 260, glutamate 262, and glutamate 267. Aspartate 450, asparagine 452, aspartate 454, asparagine 456, and glutamate 461 together coordinate Ca(2+).

Belongs to the MICU1 family. MICU1 subfamily. Expressed in both green and non-green tissues, including roots, shoots, floral buds and pollen.

The protein localises to the mitochondrion inner membrane. It is found in the mitochondrion intermembrane space. Functionally, calcium-binding protein maintaining matrix calcium levels at low concentration. Regulates mitochondrial calcium dynamics in planta by restricting influx. The chain is Calcium uptake protein, mitochondrial from Arabidopsis thaliana (Mouse-ear cress).